The primary structure comprises 94 residues: Pyrimidine/purine nucleoside phosphorylase (94 aa).

This sequence belongs to the nucleoside phosphorylase PpnP family.

The catalysed reaction is a purine D-ribonucleoside + phosphate = a purine nucleobase + alpha-D-ribose 1-phosphate. It carries out the reaction adenosine + phosphate = alpha-D-ribose 1-phosphate + adenine. It catalyses the reaction cytidine + phosphate = cytosine + alpha-D-ribose 1-phosphate. The enzyme catalyses guanosine + phosphate = alpha-D-ribose 1-phosphate + guanine. The catalysed reaction is inosine + phosphate = alpha-D-ribose 1-phosphate + hypoxanthine. It carries out the reaction thymidine + phosphate = 2-deoxy-alpha-D-ribose 1-phosphate + thymine. It catalyses the reaction uridine + phosphate = alpha-D-ribose 1-phosphate + uracil. The enzyme catalyses xanthosine + phosphate = alpha-D-ribose 1-phosphate + xanthine. Catalyzes the phosphorolysis of diverse nucleosides, yielding D-ribose 1-phosphate and the respective free bases. Can use uridine, adenosine, guanosine, cytidine, thymidine, inosine and xanthosine as substrates. Also catalyzes the reverse reactions. This is Pyrimidine/purine nucleoside phosphorylase from Pectobacterium atrosepticum (strain SCRI 1043 / ATCC BAA-672) (Erwinia carotovora subsp. atroseptica).